A 342-amino-acid polypeptide reads, in one-letter code: S-adenosylmethionine:tRNA ribosyltransferase-isomerase (342 aa).

Belongs to the QueA family. Monomer.

The protein localises to the cytoplasm. The catalysed reaction is 7-aminomethyl-7-carbaguanosine(34) in tRNA + S-adenosyl-L-methionine = epoxyqueuosine(34) in tRNA + adenine + L-methionine + 2 H(+). Its pathway is tRNA modification; tRNA-queuosine biosynthesis. Transfers and isomerizes the ribose moiety from AdoMet to the 7-aminomethyl group of 7-deazaguanine (preQ1-tRNA) to give epoxyqueuosine (oQ-tRNA). The sequence is that of S-adenosylmethionine:tRNA ribosyltransferase-isomerase from Brevibacillus brevis (strain 47 / JCM 6285 / NBRC 100599).